We begin with the raw amino-acid sequence, 181 residues long: Acireductone dioxygenase (181 aa).

Fe(2+) is bound by residues His91, His93, Glu97, and His136. Ni(2+) is bound by residues His91, His93, Glu97, and His136.

Belongs to the acireductone dioxygenase (ARD) family. In terms of assembly, monomer. Interacts with MMP14. Fe(2+) is required as a cofactor. Requires Ni(2+) as cofactor.

The protein resides in the cytoplasm. The protein localises to the nucleus. It is found in the cell membrane. It catalyses the reaction 1,2-dihydroxy-5-(methylsulfanyl)pent-1-en-3-one + O2 = 4-methylsulfanyl-2-oxobutanoate + formate + 2 H(+). It carries out the reaction 1,2-dihydroxy-5-(methylsulfanyl)pent-1-en-3-one + O2 = 3-(methylsulfanyl)propanoate + CO + formate + 2 H(+). The protein operates within amino-acid biosynthesis; L-methionine biosynthesis via salvage pathway; L-methionine from S-methyl-5-thio-alpha-D-ribose 1-phosphate: step 5/6. Catalyzes 2 different reactions between oxygen and the acireductone 1,2-dihydroxy-3-keto-5-methylthiopentene (DHK-MTPene) depending upon the metal bound in the active site. Fe-containing acireductone dioxygenase (Fe-ARD) produces formate and 2-keto-4-methylthiobutyrate (KMTB), the alpha-ketoacid precursor of methionine in the methionine recycle pathway. Ni-containing acireductone dioxygenase (Ni-ARD) produces methylthiopropionate, carbon monoxide and formate, and does not lie on the methionine recycle pathway. The protein is Acireductone dioxygenase (adi1) of Danio rerio (Zebrafish).